A 215-amino-acid polypeptide reads, in one-letter code: Cytochrome c biogenesis ATP-binding export protein CcmA (215 aa).

In terms of domain architecture, ABC transporter spans 12–215 (LAAHALTYSR…TRLLHLQKAP (204 aa)). 44–51 (GPNGIGKT) provides a ligand contact to ATP.

It belongs to the ABC transporter superfamily. CcmA exporter (TC 3.A.1.107) family. As to quaternary structure, the complex is composed of two ATP-binding proteins (CcmA) and two transmembrane proteins (CcmB).

It is found in the cell inner membrane. It catalyses the reaction heme b(in) + ATP + H2O = heme b(out) + ADP + phosphate + H(+). Part of the ABC transporter complex CcmAB involved in the biogenesis of c-type cytochromes; once thought to export heme, this seems not to be the case, but its exact role is uncertain. Responsible for energy coupling to the transport system. The chain is Cytochrome c biogenesis ATP-binding export protein CcmA from Xylella fastidiosa (strain Temecula1 / ATCC 700964).